The chain runs to 185 residues: MKICGIDEAGRGPLAGPLHIAGCILNKQIEGLKDSKKLSEKRREILYEEIIKNSTYKIVKFSAAQIDKFGLSKCLKLGLNELVDFFAPFEVKIIFDGNSKFGAEGFETMVKADDKIKEVSAASILAKVSRDRVMRNFDIKFPFYDFAKNKGYGSKAHIEAIQKYGYCEIHRKSFHLKHLQGILEF.

The RNase H type-2 domain maps to 1-185 (MKICGIDEAG…LKHLQGILEF (185 aa)). Residues aspartate 7, glutamate 8, and aspartate 96 each coordinate a divalent metal cation.

Belongs to the RNase HII family. Mn(2+) serves as cofactor. Requires Mg(2+) as cofactor.

It localises to the cytoplasm. It catalyses the reaction Endonucleolytic cleavage to 5'-phosphomonoester.. In terms of biological role, endonuclease that specifically degrades the RNA of RNA-DNA hybrids. The protein is Ribonuclease HII of Campylobacter hominis (strain ATCC BAA-381 / DSM 21671 / CCUG 45161 / LMG 19568 / NCTC 13146 / CH001A).